We begin with the raw amino-acid sequence, 612 residues long: Protein lin-61 (612 aa).

MBT repeat units follow at residues 143-249 (YLWE…MDKI), 263-380 (NDMV…GYQL), 381-501 (NAKK…LVPP), and 508-607 (FRWD…LQPP).

As to quaternary structure, interacts preferentially with histone H3 that is dimethylated or trimethylated at 'Lys-9'.

It is found in the nucleus. The protein localises to the chromosome. Its function is as follows. Synthetic multivulva class B (synMuvB) protein required to repress the induction of vulval development by Ras signaling. Unlike other synMuv proteins it does not associate with the multiprotein DRM complex and the NuRD-like complex. Interaction with methylated histone H3 is essential for vulva development. It has a role in maintaining genome stability. The sequence is that of Protein lin-61 (lin-61) from Caenorhabditis elegans.